The sequence spans 727 residues: Broad-complex core protein isoforms 1/2/3/4/5 (727 aa).

In terms of domain architecture, BTB spans 32–97; it reads VDVTLACEGR…IYHGEVNVHQ (66 aa). Polar residues predominate over residues 135 to 149; that stretch reads NSGGRTPLNTHTQSL. Disordered regions lie at residues 135 to 185, 218 to 378, 445 to 496, 532 to 583, and 604 to 626; these read NSGG…SLPS, RGSD…IGDG, INNS…RPTA, PQQQ…ANTP, and STSGSANSSLNNSNSTLNTSGGL. The span at 227-238 shows a compositional bias: low complexity; sequence SGAVGSGSNNNS. A compositionally biased stretch (gly residues) spans 281 to 298; that stretch reads TGNGNSGNGNGNGNGASN. The span at 341–355 shows a compositional bias: basic and acidic residues; the sequence is NDEHSNDSTGEHDAN. Composition is skewed to low complexity over residues 445–460, 475–495, and 533–568; these read INNSITNNNNNNNNNN, TPSPTTTTLTTPTTTTPTRPT, and QQQQQQQQQHQMSQQQQQQQQQQQQQGNSSSGQQQQ. 2 C2H2-type zinc fingers span residues 636–659 and 666–689; these read FRCNPCNKNLSSLTRLKRHIQNVH and PVCNICKRVYSSLNSLRNHKSIYH. The disordered stretch occupies residues 694–727; it reads QPKQEPGVGATQAAANSFYHQQHQQQQLNHHSSS. Low complexity predominate over residues 713 to 727; it reads HQQHQQQQLNHHSSS.

The protein resides in the nucleus. Broad-complex proteins are required for puffing and transcription of salivary gland late genes during metamorphosis. This chain is Broad-complex core protein isoforms 1/2/3/4/5 (br), found in Drosophila melanogaster (Fruit fly).